Here is a 94-residue protein sequence, read N- to C-terminus: Co-chaperonin GroES (94 aa).

It belongs to the GroES chaperonin family. As to quaternary structure, heptamer of 7 subunits arranged in a ring. Interacts with the chaperonin GroEL.

It localises to the cytoplasm. Functionally, together with the chaperonin GroEL, plays an essential role in assisting protein folding. The GroEL-GroES system forms a nano-cage that allows encapsulation of the non-native substrate proteins and provides a physical environment optimized to promote and accelerate protein folding. GroES binds to the apical surface of the GroEL ring, thereby capping the opening of the GroEL channel. This chain is Co-chaperonin GroES, found in Exiguobacterium sp. (strain ATCC BAA-1283 / AT1b).